The primary structure comprises 401 residues: Protein-glutamate methylesterase/protein-glutamine glutaminase (401 aa).

Residues 16 to 134 (RVLVIDDSAV…LAGAEEFRRD (119 aa)) form the Response regulatory domain. Position 67 is a 4-aspartylphosphate (Asp-67). The disordered stretch occupies residues 146–208 (PIPPVPTQRD…PQGRGTPRNT (63 aa)). Composition is skewed to low complexity over residues 166–176 (AAPGAPVARSI) and 185–199 (SAPA…AQPP). The CheB-type methylesterase domain occupies 205–400 (PRNTARPEII…PGIVRRAKGG (196 aa)). Residues Ser-219, His-246, and Asp-342 contribute to the active site.

The protein belongs to the CheB family. In terms of processing, phosphorylated by CheA. Phosphorylation of the N-terminal regulatory domain activates the methylesterase activity.

The protein resides in the cytoplasm. It catalyses the reaction [protein]-L-glutamate 5-O-methyl ester + H2O = L-glutamyl-[protein] + methanol + H(+). The catalysed reaction is L-glutaminyl-[protein] + H2O = L-glutamyl-[protein] + NH4(+). Its function is as follows. Involved in chemotaxis. Part of a chemotaxis signal transduction system that modulates chemotaxis in response to various stimuli. Catalyzes the demethylation of specific methylglutamate residues introduced into the chemoreceptors (methyl-accepting chemotaxis proteins or MCP) by CheR. Also mediates the irreversible deamidation of specific glutamine residues to glutamic acid. The polypeptide is Protein-glutamate methylesterase/protein-glutamine glutaminase (Maricaulis maris (strain MCS10) (Caulobacter maris)).